The primary structure comprises 308 residues: Homeobox protein abdominal-A homolog (308 aa).

Positions 138–197 (RRRGRQTYTRFQTLELEKEFHFNHYLTRRRRIEIAHALCLTERQIKIWFQNRRMKLKKEL) form a DNA-binding region, homeobox. Basic and acidic residues predominate over residues 207 to 221 (ARREREEQDKMKNES). The tract at residues 207-277 (ARREREEQDK…SGNLGSHLHH (71 aa)) is disordered. Positions 223–247 (KSAQQHHSQKQAQQEHTVVGSQQTS) are enriched in low complexity. The span at 248-269 (NGGGTGGGTGGSGGAGSGGSSG) shows a compositional bias: gly residues.

This sequence belongs to the Antp homeobox family.

Its subcellular location is the nucleus. Sequence-specific transcription factor which is part of a developmental regulatory system that provides cells with specific positional identities on the anterior-posterior axis. This chain is Homeobox protein abdominal-A homolog, found in Anopheles gambiae (African malaria mosquito).